The chain runs to 416 residues: Glutamyl-tRNA reductase (416 aa).

Substrate-binding positions include 51-54 (TCNR), Ser110, 115-117 (EPQ), and Gln121. Residue Cys52 is the Nucleophile of the active site. 190 to 195 (GAGQTG) provides a ligand contact to NADP(+).

Belongs to the glutamyl-tRNA reductase family. As to quaternary structure, homodimer.

The catalysed reaction is (S)-4-amino-5-oxopentanoate + tRNA(Glu) + NADP(+) = L-glutamyl-tRNA(Glu) + NADPH + H(+). It functions in the pathway porphyrin-containing compound metabolism; protoporphyrin-IX biosynthesis; 5-aminolevulinate from L-glutamyl-tRNA(Glu): step 1/2. Catalyzes the NADPH-dependent reduction of glutamyl-tRNA(Glu) to glutamate 1-semialdehyde (GSA). The sequence is that of Glutamyl-tRNA reductase from Francisella tularensis subsp. holarctica (strain OSU18).